The sequence spans 65 residues: Putative antitoxin PF2058 (65 aa).

This sequence belongs to the UPF0165 family.

Its function is as follows. Possibly the antitoxin component of a type II toxin-antitoxin (TA) system. This chain is Putative antitoxin PF2058, found in Pyrococcus furiosus (strain ATCC 43587 / DSM 3638 / JCM 8422 / Vc1).